The following is a 253-amino-acid chain: Indole-3-glycerol phosphate synthase (253 aa).

The protein belongs to the TrpC family.

It catalyses the reaction 1-(2-carboxyphenylamino)-1-deoxy-D-ribulose 5-phosphate + H(+) = (1S,2R)-1-C-(indol-3-yl)glycerol 3-phosphate + CO2 + H2O. It functions in the pathway amino-acid biosynthesis; L-tryptophan biosynthesis; L-tryptophan from chorismate: step 4/5. This is Indole-3-glycerol phosphate synthase from Bacillus cereus (strain ATCC 10987 / NRS 248).